Reading from the N-terminus, the 483-residue chain is Glycogen synthase (483 aa).

Lys15 contacts ADP-alpha-D-glucose.

Belongs to the glycosyltransferase 1 family. Bacterial/plant glycogen synthase subfamily.

The catalysed reaction is [(1-&gt;4)-alpha-D-glucosyl](n) + ADP-alpha-D-glucose = [(1-&gt;4)-alpha-D-glucosyl](n+1) + ADP + H(+). It functions in the pathway glycan biosynthesis; glycogen biosynthesis. Functionally, synthesizes alpha-1,4-glucan chains using ADP-glucose. This is Glycogen synthase from Alkalilimnicola ehrlichii (strain ATCC BAA-1101 / DSM 17681 / MLHE-1).